The following is a 349-amino-acid chain: MSAKTNAKKKEQDKPQSSGLGLDGLGDLAGLLNEQPAANAGGAGPQELPLDLIDEDPHQPRTADNPGFSPESIAEIGETIKARGVKSPISVRENPDAPGRYLINHGARRYRGSKWAHKTTIPAFIDNDYNEADQVIENLQRNELTAREIADFIGRELAKGKKKGEIAKEIGKSPAFVTQHVTLLDLPEPIAEAFNSGRGKDVTVINELVTAYKKNPDEVAAWLADDSQELTRGSVKLLREFLEDKRSHDDGDRDPNTVDALTGKTDAEAGDGEQGPQDDDAKGKKEPKEADPDKLKKAIIQVKHDDRPARLILNRRPPAEGWAWLKYEDDGQEFEADLGTVQLVALLEG.

2 disordered regions span residues 1 to 72 (MSAK…SPES) and 246 to 296 (RSHD…DKLK). Residues 25–40 (LGDLAGLLNEQPAANA) are compositionally biased toward low complexity. Composition is skewed to basic and acidic residues over residues 246–256 (RSHDDGDRDPN) and 279–296 (DDAK…DKLK).

This sequence belongs to the ParB family.

Its function is as follows. In conjunction with KorA, inhibits the transcription of the kilA, trfA and korAB operons. Is also involved in the negative control of the kilB operon. The sequence is that of Transcriptional repressor protein KorB (korB) from Escherichia coli.